Reading from the N-terminus, the 441-residue chain is Ribulose bisphosphate carboxylase large chain (441 aa).

The substrate site is built by Asn89 and Thr139. Lys141 functions as the Proton acceptor in the catalytic mechanism. Lys143 is a binding site for substrate. The Mg(2+) site is built by Lys167, Asp169, and Glu170. Lys167 carries the post-translational modification N6-carboxylysine. His260 functions as the Proton acceptor in the catalytic mechanism. Substrate is bound by residues Xaa261 and Ser345.

This sequence belongs to the RuBisCO large chain family. Type I subfamily. As to quaternary structure, heterohexadecamer of 8 large chains and 8 small chains; disulfide-linked. The disulfide link is formed within the large subunit homodimers. Requires Mg(2+) as cofactor. Post-translationally, the disulfide bond which can form in the large chain dimeric partners within the hexadecamer appears to be associated with oxidative stress and protein turnover.

It is found in the plastid. Its subcellular location is the chloroplast. The enzyme catalyses 2 (2R)-3-phosphoglycerate + 2 H(+) = D-ribulose 1,5-bisphosphate + CO2 + H2O. It catalyses the reaction D-ribulose 1,5-bisphosphate + O2 = 2-phosphoglycolate + (2R)-3-phosphoglycerate + 2 H(+). Functionally, ruBisCO catalyzes two reactions: the carboxylation of D-ribulose 1,5-bisphosphate, the primary event in carbon dioxide fixation, as well as the oxidative fragmentation of the pentose substrate in the photorespiration process. Both reactions occur simultaneously and in competition at the same active site. The protein is Ribulose bisphosphate carboxylase large chain of Asclepias exaltata (Poke milkweed).